Consider the following 145-residue polypeptide: Ribosomal RNA large subunit methyltransferase H (145 aa).

S-adenosyl-L-methionine contacts are provided by residues Leu64, Gly93, and 112–117 (LSPLTF).

This sequence belongs to the RNA methyltransferase RlmH family. Homodimer.

It localises to the cytoplasm. It catalyses the reaction pseudouridine(1915) in 23S rRNA + S-adenosyl-L-methionine = N(3)-methylpseudouridine(1915) in 23S rRNA + S-adenosyl-L-homocysteine + H(+). In terms of biological role, specifically methylates the pseudouridine at position 1915 (m3Psi1915) in 23S rRNA. The polypeptide is Ribosomal RNA large subunit methyltransferase H (Prochlorococcus marinus (strain NATL1A)).